The primary structure comprises 644 residues: Macrolide export ATP-binding/permease protein MacB (644 aa).

In terms of domain architecture, ABC transporter spans 4-242 (IECKNINRYF…SNVGRIREKA (239 aa)). Residue 40–47 (GQSGSGKS) coordinates ATP. The next 4 helical transmembrane spans lie at 270-290 (LLTMLGIIIGIASVVSVVALG), 524-544 (IALISLVVGGIGVMNIMLVSV), 574-594 (LICVIGGLVGVGLSAAVSLVF), and 607-627 (AMSVIGAVACSTGIGIAFGFM).

Belongs to the ABC transporter superfamily. Macrolide exporter (TC 3.A.1.122) family. As to quaternary structure, homodimer.

The protein localises to the cell inner membrane. Its function is as follows. Non-canonical ABC transporter that contains transmembrane domains (TMD), which form a pore in the inner membrane, and an ATP-binding domain (NBD), which is responsible for energy generation. Confers resistance against macrolides. The chain is Macrolide export ATP-binding/permease protein MacB from Neisseria meningitidis serogroup B (strain ATCC BAA-335 / MC58).